A 94-amino-acid chain; its full sequence is Integration host factor subunit beta (94 aa).

It belongs to the bacterial histone-like protein family. Heterodimer of an alpha and a beta chain.

Its function is as follows. This protein is one of the two subunits of integration host factor, a specific DNA-binding protein that functions in genetic recombination as well as in transcriptional and translational control. The protein is Integration host factor subunit beta of Histophilus somni (strain 129Pt) (Haemophilus somnus).